The sequence spans 230 residues: Orotidine 5'-phosphate decarboxylase (230 aa).

Substrate-binding positions include Asp-10, Lys-31, 58–67 (DLKLHDIPNT), Thr-117, Arg-179, Gln-188, Gly-208, and Arg-209. Residue Lys-60 is the Proton donor of the active site.

It belongs to the OMP decarboxylase family. Type 1 subfamily. As to quaternary structure, homodimer.

The catalysed reaction is orotidine 5'-phosphate + H(+) = UMP + CO2. The protein operates within pyrimidine metabolism; UMP biosynthesis via de novo pathway; UMP from orotate: step 2/2. Its function is as follows. Catalyzes the decarboxylation of orotidine 5'-monophosphate (OMP) to uridine 5'-monophosphate (UMP). In Staphylococcus aureus (strain Mu3 / ATCC 700698), this protein is Orotidine 5'-phosphate decarboxylase.